A 202-amino-acid chain; its full sequence is Sperm-specific H1/protamine-like protein type 1 (202 aa).

Over residues methionine 1 to arginine 35 the composition is skewed to basic residues. Disordered regions lie at residues methionine 1–leucine 46 and lysine 104–leucine 202. The region spanning lysine 41 to lysine 120 is the H15 domain. The span at lysine 126–lysine 156 shows a compositional bias: basic residues. A compositionally biased stretch (low complexity) spans glycine 177–tyrosine 187.

OE1 and OE3 are produced by post-translational cleavage of a common precursor. As to expression, sperm.

It localises to the nucleus. The protein resides in the chromosome. Linker histones are implicated in chromatin remodeling and/or transcriptional regulation during spermiogenesis, the process of spermatid maturation into spermatozoa. Protamines substitute for histones in the chromatin of sperm during the haploid phase of spermatogenesis. They compact sperm DNA into a highly condensed, stable and inactive complex. The chain is Sperm-specific H1/protamine-like protein type 1 from Ostrea edulis (Native oyster).